The chain runs to 314 residues: Oxidoreductase NAD-binding domain-containing protein 1 (314 aa).

The signal sequence occupies residues 1 to 18; that stretch reads MALVAGSAAYQVLRGVTG. One can recognise an FAD-binding FR-type domain in the interval 63 to 166; the sequence is EIISPAKVCG…VGGEFCFDPQ (104 aa). 180-185 is a binding site for NAD(+); the sequence is GVGINP.

The protein is Oxidoreductase NAD-binding domain-containing protein 1 (oxnad1) of Xenopus laevis (African clawed frog).